The chain runs to 329 residues: Protein STRICTOSIDINE SYNTHASE-LIKE 11 (329 aa).

An N-terminal signal peptide occupies residues 1–23; sequence MMRSFVSLISLLLLLSFSSSVLS. Residues Asn37 and Asn79 are each glycosylated (N-linked (GlcNAc...) asparagine).

It belongs to the strictosidine synthase family.

The protein resides in the vacuole. It carries out the reaction 3alpha(S)-strictosidine + H2O = secologanin + tryptamine. It functions in the pathway alkaloid biosynthesis; 3alpha(S)-strictosidine biosynthesis; 3alpha(S)-strictosidine from secologanin and tryptamine: step 1/1. In terms of biological role, catalyzes the stereospecific condensation of tryptamine with secologanin to form strictosidine, the key intermediate of indole alkaloid biosynthesis. The chain is Protein STRICTOSIDINE SYNTHASE-LIKE 11 from Arabidopsis thaliana (Mouse-ear cress).